A 132-amino-acid polypeptide reads, in one-letter code: Small ribosomal subunit protein uS8 (132 aa).

The protein belongs to the universal ribosomal protein uS8 family. Part of the 30S ribosomal subunit. Contacts proteins S5 and S12.

In terms of biological role, one of the primary rRNA binding proteins, it binds directly to 16S rRNA central domain where it helps coordinate assembly of the platform of the 30S subunit. The polypeptide is Small ribosomal subunit protein uS8 (Xanthomonas euvesicatoria pv. vesicatoria (strain 85-10) (Xanthomonas campestris pv. vesicatoria)).